The sequence spans 140 residues: Large ribosomal subunit protein bL17 (140 aa).

Belongs to the bacterial ribosomal protein bL17 family. In terms of assembly, part of the 50S ribosomal subunit. Contacts protein L32.

The sequence is that of Large ribosomal subunit protein bL17 from Methylobacterium nodulans (strain LMG 21967 / CNCM I-2342 / ORS 2060).